We begin with the raw amino-acid sequence, 131 residues long: Peptide methionine sulfoxide reductase MsrB (131 aa).

The 123-residue stretch at 8–130 folds into the MsrB domain; the sequence is LEEWRAMLDP…NSVCLDLVPR (123 aa). Residues cysteine 47, cysteine 50, cysteine 96, and cysteine 99 each coordinate Zn(2+). The active-site Nucleophile is cysteine 119.

This sequence belongs to the MsrB Met sulfoxide reductase family. Requires Zn(2+) as cofactor.

The enzyme catalyses L-methionyl-[protein] + [thioredoxin]-disulfide + H2O = L-methionyl-(R)-S-oxide-[protein] + [thioredoxin]-dithiol. The sequence is that of Peptide methionine sulfoxide reductase MsrB from Pseudomonas fluorescens (strain Pf0-1).